We begin with the raw amino-acid sequence, 237 residues long: MTLNKLVLIRHGESKWNNENRFTGWTDIDLSDQGRIEAKNAGQLLKQAGFIFDFAYTSVLKRAIHTLWYILDELDQAWLPVEKSWRLNERHYGALQGLNKKKITVEYGEEQVQQWRRSLNITPPELSDNDKRLPIYDIRYAKLSLDQLPKAESLAMTINRIIPYWKGEILPRINNGERVIIAAHGNSIRAIITLLDQLSENELIQLNIPTGVPIIYEFNSQIKTIKHYYLSIVNKDY.

Residues 10–17 (RHGESKWN), 23–24 (TG), Arg62, 89–92 (ERHY), Lys100, 116–117 (RR), and 185–186 (GN) contribute to the substrate site. Residue His11 is the Tele-phosphohistidine intermediate of the active site. The Proton donor/acceptor role is filled by Glu89.

This sequence belongs to the phosphoglycerate mutase family. BPG-dependent PGAM subfamily. In terms of assembly, homodimer.

The enzyme catalyses (2R)-2-phosphoglycerate = (2R)-3-phosphoglycerate. Its pathway is carbohydrate degradation; glycolysis; pyruvate from D-glyceraldehyde 3-phosphate: step 3/5. In terms of biological role, catalyzes the interconversion of 2-phosphoglycerate and 3-phosphoglycerate. The polypeptide is 2,3-bisphosphoglycerate-dependent phosphoglycerate mutase (Baumannia cicadellinicola subsp. Homalodisca coagulata).